The chain runs to 543 residues: Organic anion transporter 3 (543 aa).

Residues 1-21 (MTFAELVDRVGSKGPFQLLHT) lie on the Cytoplasmic side of the membrane. The helical transmembrane segment at 22–42 (VLLGLPILGMANHNLLQIFTA) threads the bilayer. Residues 43 to 124 (PTPAHHCRPP…LVCSSSKLKE (82 aa)) are Extracellular-facing. N81 is a glycosylation site (N-linked (GlcNAc...) asparagine). Residues 125-145 (MAQSVFMAGILVGGLVLGALS) traverse the membrane as a helical segment. Over 146–151 (DRFGRK) the chain is Cytoplasmic. A helical transmembrane segment spans residues 152–172 (PILIFSYLLLGASGSGAAFSP). Residues 173 to 181 (TFSIYAVFR) lie on the Extracellular side of the membrane. A helical membrane pass occupies residues 182–202 (FLCGFSISGISLSTAILNVEW). The Cytoplasmic portion of the chain corresponds to 203–212 (VSTRFRAIKS). Residues 213–233 (IAVGFFYTFGQFILPGLAYAI) form a helical membrane-spanning segment. Residues 234–237 (PQWR) are Extracellular-facing. Residues 238-258 (WLQLTVSVPFLTFFLLSWWLP) form a helical membrane-spanning segment. Topologically, residues 259 to 328 (ESIRWMVLSG…FRTPVLRRVT (70 aa)) are cytoplasmic. The helical transmembrane segment at 329 to 349 (LCLSLAWFATGFAYYSLAMGV) threads the bilayer. Over 350–355 (EEFGVN) the chain is Extracellular. Residues 356-376 (LYVLQLIFGGVDVPAKFITML) form a helical membrane-spanning segment. Topologically, residues 377-388 (SISYLGRHITEG) are cytoplasmic. The helical transmembrane segment at 389–409 (IVLLLAGGCILALIFVPLDLM) threads the bilayer. The Extracellular portion of the chain corresponds to 410-412 (TLR). A helical membrane pass occupies residues 413–433 (TVLAVFGKGCLSGSFSCLFLY). At 434 to 472 (TSELYPTVIRQTGMGASNLWARVGSMTAPLVKITGELQP) the chain is on the cytoplasmic side. The helical transmembrane segment at 473 to 493 (FIPNIIFGTIALLGGSAALFL) threads the bilayer. Residues 494 to 543 (PETLNRPLPETIEDIETWSLRAKEPKPEPEAEKSSQRIPLQPCEPGPGPS) lie on the Extracellular side of the membrane. The disordered stretch occupies residues 513-543 (LRAKEPKPEPEAEKSSQRIPLQPCEPGPGPS). Basic and acidic residues predominate over residues 514-528 (RAKEPKPEPEAEKSS).

Belongs to the major facilitator (TC 2.A.1) superfamily. Organic cation transporter (TC 2.A.1.19) family. Expressed in kidney.

The protein localises to the basolateral cell membrane. It carries out the reaction estrone 3-sulfate(out) + glutarate(in) = estrone 3-sulfate(in) + glutarate(out). The enzyme catalyses estrone 3-sulfate(in) + 2-oxoglutarate(out) = estrone 3-sulfate(out) + 2-oxoglutarate(in). The catalysed reaction is glutarate(in) + 2-oxoglutarate(out) = glutarate(out) + 2-oxoglutarate(in). It catalyses the reaction urate(in) + 2-oxoglutarate(out) = urate(out) + 2-oxoglutarate(in). It carries out the reaction taurocholate(out) + glutarate(in) = taurocholate(in) + glutarate(out). The enzyme catalyses dehydroepiandrosterone 3-sulfate(out) + glutarate(in) = dehydroepiandrosterone 3-sulfate(in) + glutarate(out). The catalysed reaction is prostaglandin F2alpha(out) + glutarate(in) = prostaglandin F2alpha(in) + glutarate(out). It catalyses the reaction prostaglandin F2alpha(out) + 2-oxoglutarate(in) = prostaglandin F2alpha(in) + 2-oxoglutarate(out). It carries out the reaction (R)-carnitine(out) + 2-oxoglutarate(in) = (R)-carnitine(in) + 2-oxoglutarate(out). The enzyme catalyses glutarate(in) + (R)-carnitine(out) = glutarate(out) + (R)-carnitine(in). The catalysed reaction is prostaglandin E2(out) + 2-oxoglutarate(in) = prostaglandin E2(in) + 2-oxoglutarate(out). It catalyses the reaction prostaglandin E2(out) + glutarate(in) = prostaglandin E2(in) + glutarate(out). It carries out the reaction urate(in) + glutarate(out) = urate(out) + glutarate(in). The enzyme catalyses taurocholate(out) + 2-oxoglutarate(in) = taurocholate(in) + 2-oxoglutarate(out). The catalysed reaction is dehydroepiandrosterone 3-sulfate(out) + 2-oxoglutarate(in) = dehydroepiandrosterone 3-sulfate(in) + 2-oxoglutarate(out). It catalyses the reaction kynurenate(out) + a dicarboxylate(in) = kynurenate(in) + a dicarboxylate(out). It carries out the reaction (indol-3-yl)acetate(out) + a dicarboxylate(in) = (indol-3-yl)acetate(in) + a dicarboxylate(out). The enzyme catalyses indoxyl sulfate(out) + a dicarboxylate(in) = indoxyl sulfate(in) + a dicarboxylate(out). The catalysed reaction is N-benzoylglycine(out) + a dicarboxylate(in) = N-benzoylglycine(in) + a dicarboxylate(out). It catalyses the reaction 3-carboxy-4-methyl-5-propyl-2-furanpropanoate(out) + a dicarboxylate(in) = 3-carboxy-4-methyl-5-propyl-2-furanpropanoate(in) + a dicarboxylate(out). It carries out the reaction (6R)-L-erythro-5,6,7,8-tetrahydrobiopterin(out) + a dicarboxylate(in) = (6R)-L-erythro-5,6,7,8-tetrahydrobiopterin(in) + a dicarboxylate(out). The enzyme catalyses L-erythro-7,8-dihydrobiopterin(out) + a dicarboxylate(in) = L-erythro-7,8-dihydrobiopterin(in) + a dicarboxylate(out). The catalysed reaction is L-sepiapterin(out) + a dicarboxylate(in) = L-sepiapterin(in) + a dicarboxylate(out). Functions as an organic anion/dicarboxylate exchanger that couples organic anion uptake indirectly to the sodium gradient. Transports organic anions such as estrone 3-sulfate (E1S) and urate in exchange for dicarboxylates such as glutarate or ketoglutarate (2-oxoglutarate). Plays an important role in the excretion of endogenous and exogenous organic anions, especially from the kidney and the brain. E1S transport is pH- and chloride-dependent and may also involve E1S/cGMP exchange. Responsible for the transport of prostaglandin E2 (PGE2) and prostaglandin F2(alpha) (PGF2(alpha)) in the basolateral side of the renal tubule. Involved in the transport of neuroactive tryptophan metabolites kynurenate and xanthurenate. Functions as a biopterin transporters involved in the uptake and the secretion of coenzymes tetrahydrobiopterin (BH4), dihydrobiopterin (BH2) and sepiapterin to urine, thereby determining baseline levels of blood biopterins. May be involved in the basolateral transport of steviol, a metabolite of the popular sugar substitute stevioside. May participate in the detoxification/ renal excretion of drugs and xenobiotics, such as the histamine H(2)-receptor antagonists fexofenadine and cimetidine, the antibiotic benzylpenicillin (PCG), the anionic herbicide 2,4-dichloro-phenoxyacetate (2,4-D), the diagnostic agent p-aminohippurate (PAH), the antiviral acyclovir (ACV), and the mycotoxin ochratoxin (OTA), by transporting these exogenous organic anions across the cell membrane in exchange for dicarboxylates such as 2-oxoglutarate. Contributes to the renal uptake of potent uremic toxins (indoxyl sulfate (IS), indole acetate (IA), hippurate/N-benzoylglycine (HA) and 3-carboxy-4-methyl-5-propyl-2-furanpropionate (CMPF)), pravastatin, PCG, E1S and dehydroepiandrosterone sulfate (DHEAS), and is partly involved in the renal uptake of temocaprilat (an angiotensin-converting enzyme (ACE) inhibitor). May contribute to the release of cortisol in the adrenals. Involved in one of the detoxification systems on the choroid plexus (CP), removes substrates such as E1S or taurocholate (TC), PCG, 2,4-D and PAH, from the cerebrospinal fluid (CSF) to the blood for eventual excretion in urine and bile. Also contributes to the uptake of several other organic compounds such as the prostanoids prostaglandin E(2) and prostaglandin F(2-alpha), L-carnitine, and the therapeutic drugs allopurinol, 6-mercaptopurine (6-MP) and 5-fluorouracil (5-FU). Mediates the transport of PAH, PCG, and the statins pravastatin and pitavastatin, from the cerebrum into the blood circulation across the blood-brain barrier (BBB). In summary, plays a role in the efflux of drugs and xenobiotics, helping reduce their undesired toxicological effects on the body. The chain is Organic anion transporter 3 (SLC22A8) from Sus scrofa (Pig).